Reading from the N-terminus, the 908-residue chain is SH3 and PX domain-containing protein 2B (908 aa).

Residues 5–129 (RSIVEVKVLD…QFFETRPEDL (125 aa)) enclose the PX domain. A Phosphotyrosine modification is found at Tyr25. 2 SH3 domains span residues 152 to 211 (MVLE…GQDG) and 221 to 280 (EEEE…KNSG). Phosphoserine is present on residues Ser279 and Ser291. Disordered stretches follow at residues 280–300 (GEPL…ALDL) and 315–366 (ELLN…PPIP). The span at 315 to 337 (ELLNNQRDGRFEGRLVPDGDVKQ) shows a compositional bias: basic and acidic residues. Positions 338–347 (RSPKMRQRPP) are enriched in basic residues. The 60-residue stretch at 368 to 427 (QVEEEYYTIAEFQTTIPDGISFQAGLKVEVIEKSLSGWWYIQMEDKEGWAPATFIDKYKK) folds into the SH3 3 domain. The interval 455–832 (TENNTGPEAV…LGPRVTGKVG (378 aa)) is disordered. 5 stretches are compositionally biased toward basic and acidic residues: residues 486–499 (KDWK…RKAS), 516–546 (QEEK…KMEP), 569–584 (LARD…DKSK), 595–606 (CGHKVLAKEVKK), and 615–625 (SKAELSEEKVD). Residues Ser499 and Ser528 each carry the phosphoserine modification. Residue Tyr661 is modified to Phosphotyrosine. Basic and acidic residues predominate over residues 671–684 (KSQEKALLDGESHH). Over residues 754–764 (VVPPRRPPPPK) the composition is skewed to pro residues. Ser840 is modified (phosphoserine). An SH3 4 domain is found at 847–908 (PKDSLYVAVA…IPSNYLRKKP (62 aa)).

Belongs to the SH3PXD2 family. Interacts with NOXO1. Interacts (via SH3 domains) with NOXA1; the interaction is direct. Interacts with ADAM15. Interacts with FASLG. Phosphorylated in SRC-transformed cells. Highly expressed in the stromal-vascular fraction of white adipose tissue with moderate expression in heart, skeletal muscle and the mature adipocyte fraction of white adipose tissue. Also expressed in brain, spleen, kidney and liver. Expressed in white and brown adipose tissues, eye, lung, heart, brain, spleen, stomach, liver and skeletal muscle (at protein level). Not expressed in kidney or bone marrow.

It localises to the cytoplasm. The protein localises to the cell projection. It is found in the podosome. Functionally, adapter protein involved in invadopodia and podosome formation and extracellular matrix degradation. Binds matrix metalloproteinases (ADAMs), NADPH oxidases (NOXs) and phosphoinositides. Acts as an organizer protein that allows NOX1- or NOX3-dependent reactive oxygen species (ROS) generation and ROS localization. Plays a role in mitotic clonal expansion during the immediate early stage of adipocyte differentiation. The sequence is that of SH3 and PX domain-containing protein 2B (Sh3pxd2b) from Mus musculus (Mouse).